We begin with the raw amino-acid sequence, 156 residues long: MTRLTHIDDQGRARMVDVSDKAETVREAIAVGFVRMTPETLALAITGAGRKGDVRAVAEIAGVMAAKKTADLIPLCHPLALSKVEVSVEVAEGGLAVMARVKLKGQTGVEMEALTAVSVACLTIYDMLKAAEKGMVIETVRLVEKTGGKSGAWRAE.

Residues 75–77 (LCH) and 111–112 (ME) contribute to the substrate site. The active site involves Asp126.

It belongs to the MoaC family. In terms of assembly, homohexamer; trimer of dimers.

The catalysed reaction is (8S)-3',8-cyclo-7,8-dihydroguanosine 5'-triphosphate = cyclic pyranopterin phosphate + diphosphate. Its pathway is cofactor biosynthesis; molybdopterin biosynthesis. Catalyzes the conversion of (8S)-3',8-cyclo-7,8-dihydroguanosine 5'-triphosphate to cyclic pyranopterin monophosphate (cPMP). In Caulobacter sp. (strain K31), this protein is Cyclic pyranopterin monophosphate synthase.